The sequence spans 158 residues: Large ribosomal subunit protein uL11 (158 aa).

The protein belongs to the universal ribosomal protein uL11 family. In terms of assembly, part of the ribosomal stalk of the 50S ribosomal subunit. Interacts with L10 and the large rRNA to form the base of the stalk. L10 forms an elongated spine to which L12 dimers bind in a sequential fashion forming a multimeric L10(L12)X complex.

In terms of biological role, forms part of the ribosomal stalk which helps the ribosome interact with GTP-bound translation factors. This Methanocella arvoryzae (strain DSM 22066 / NBRC 105507 / MRE50) protein is Large ribosomal subunit protein uL11.